A 494-amino-acid chain; its full sequence is Ketol-acid reductoisomerase (NADP(+)) (494 aa).

The KARI N-terminal Rossmann domain maps to 14 to 208 (LDQLGRCRFM…GGHRAGCLES (195 aa)). NADP(+)-binding positions include 45–48 (CGAQ), arginine 68, arginine 76, serine 78, and 108–110 (DKQ). The active site involves histidine 132. Glycine 158 serves as a coordination point for NADP(+). KARI C-terminal knotted domains lie at 209-344 (SFVA…NYPS) and 345-487 (TDVE…MTDM). Mg(2+)-binding residues include aspartate 217, glutamate 221, glutamate 389, and glutamate 393. Serine 414 lines the substrate pocket.

It belongs to the ketol-acid reductoisomerase family. Mg(2+) is required as a cofactor.

The catalysed reaction is (2R)-2,3-dihydroxy-3-methylbutanoate + NADP(+) = (2S)-2-acetolactate + NADPH + H(+). It catalyses the reaction (2R,3R)-2,3-dihydroxy-3-methylpentanoate + NADP(+) = (S)-2-ethyl-2-hydroxy-3-oxobutanoate + NADPH + H(+). It participates in amino-acid biosynthesis; L-isoleucine biosynthesis; L-isoleucine from 2-oxobutanoate: step 2/4. The protein operates within amino-acid biosynthesis; L-valine biosynthesis; L-valine from pyruvate: step 2/4. Its function is as follows. Involved in the biosynthesis of branched-chain amino acids (BCAA). Catalyzes an alkyl-migration followed by a ketol-acid reduction of (S)-2-acetolactate (S2AL) to yield (R)-2,3-dihydroxy-isovalerate. In the isomerase reaction, S2AL is rearranged via a Mg-dependent methyl migration to produce 3-hydroxy-3-methyl-2-ketobutyrate (HMKB). In the reductase reaction, this 2-ketoacid undergoes a metal-dependent reduction by NADPH to yield (R)-2,3-dihydroxy-isovalerate. This Vibrio vulnificus (strain CMCP6) protein is Ketol-acid reductoisomerase (NADP(+)).